A 930-amino-acid chain; its full sequence is Protocadherin gamma-B6 (930 aa).

The N-terminal stretch at 1–30 (MGGSCAQRRRAGPRQVLFPLLLPLFYPTLS) is a signal peptide. Cadherin domains are found at residues 31–133 (EPIR…APQF), 134–242 (DKKE…PPVF), 243–347 (SRDE…SPEI), 348–452 (IITS…APVF), 453–562 (DQTS…APRV), and 570–675 (DGSA…LPDL). Residues 31–691 (EPIRYSIPEE…SDPQAELQFY (661 aa)) are Extracellular-facing. 3 N-linked (GlcNAc...) asparagine glycosylation sites follow: asparagine 304, asparagine 419, and asparagine 545. The chain crosses the membrane as a helical span at residues 692–712 (LVVALALISVLFLLAVILAIA). Residues 713 to 930 (LRLRRSLSPA…KKKSGKKEKK (218 aa)) are Cytoplasmic-facing. 2 disordered regions span residues 791-839 (PHGG…WPNN) and 900-930 (ATLT…KEKK). The segment covering 800-839 (HPETLTSQAPPNTDWRFSQAQRPGTSGSQNGDDTGTWPNN) has biased composition (polar residues). Over residues 920–930 (NKKKSGKKEKK) the composition is skewed to basic residues.

Its subcellular location is the cell membrane. Potential calcium-dependent cell-adhesion protein. May be involved in the establishment and maintenance of specific neuronal connections in the brain. This Homo sapiens (Human) protein is Protocadherin gamma-B6 (PCDHGB6).